We begin with the raw amino-acid sequence, 219 residues long: Thiopurine S-methyltransferase (219 aa).

4 residues coordinate S-adenosyl-L-methionine: Trp-10, Leu-45, Glu-66, and Arg-123.

Belongs to the class I-like SAM-binding methyltransferase superfamily. TPMT family.

The protein localises to the cytoplasm. The catalysed reaction is S-adenosyl-L-methionine + a thiopurine = S-adenosyl-L-homocysteine + a thiopurine S-methylether.. The polypeptide is Thiopurine S-methyltransferase (Bordetella petrii (strain ATCC BAA-461 / DSM 12804 / CCUG 43448)).